The sequence spans 269 residues: HTH-type transcriptional activator ArnR1 (269 aa).

The Cytoplasmic segment spans residues 1-217 (MSSMNKRVFD…LLKLTGSYRY (217 aa)). Residues 42 to 65 (TTEISQTINTSRKSIIDAIRKLVD) constitute a DNA-binding region (H-T-H motif). A helical membrane pass occupies residues 218–238 (EIALTKVMLFNVISIPVLMYL). Residues 239 to 241 (KDQ) are Extracellular-facing. Residues 242 to 262 (LGILEAIWLYVIILLPLLSIF) traverse the membrane as a helical segment. Residues 263–269 (AEIFNRI) lie on the Cytoplasmic side of the membrane.

The protein resides in the cell membrane. Involved in regulation of archaellar gene expression. May activate flaB transcription upon nutrient starvation by acting on the flaB promoter. This chain is HTH-type transcriptional activator ArnR1, found in Sulfolobus acidocaldarius (strain ATCC 33909 / DSM 639 / JCM 8929 / NBRC 15157 / NCIMB 11770).